A 424-amino-acid chain; its full sequence is Trigger factor (424 aa).

Residues 163–248 form the PPIase FKBP-type domain; the sequence is GDTVVLDFEG…IHEIKAKELP (86 aa).

The protein belongs to the FKBP-type PPIase family. Tig subfamily.

Its subcellular location is the cytoplasm. It catalyses the reaction [protein]-peptidylproline (omega=180) = [protein]-peptidylproline (omega=0). Involved in protein export. Acts as a chaperone by maintaining the newly synthesized protein in an open conformation. Functions as a peptidyl-prolyl cis-trans isomerase. This is Trigger factor from Bacillus licheniformis (strain ATCC 14580 / DSM 13 / JCM 2505 / CCUG 7422 / NBRC 12200 / NCIMB 9375 / NCTC 10341 / NRRL NRS-1264 / Gibson 46).